A 703-amino-acid chain; its full sequence is Protein teflon (703 aa).

The C2H2-type 1 zinc finger occupies 32–55; the sequence is MLCHFCKDIFTHLPEFMRHLQWSH. Disordered regions lie at residues 78–111, 140–161, 205–239, and 339–434; these read SSED…PGSS, EQSY…ARKP, NDVS…MPSL, and SQQP…SKLE. A compositionally biased stretch (polar residues) spans 84-94; the sequence is QSQANSCSSGD. Residues 148–161 are compositionally biased toward basic and acidic residues; it reads PDSRTEGFRCARKP. Polar residues-rich tracts occupy residues 339–352 and 364–373; these read SQQP…NNAV and SLTVISSSPI. 2 consecutive C2H2-type zinc fingers follow at residues 649–672 and 677–700; these read YFCE…QSVH and FTCS…KTVH.

The protein belongs to the Teflon family.

The protein resides in the nucleus. It is found in the chromosome. Its function is as follows. Specifically required in males for proper segregation of autosomal bivalents at meiosis I. Expression is required in the male germ line prior to spermatocyte stage S4. May have a role as a bridging molecule maintaining adhesion to hold autosome bivalents together via heterochromatic connections. The protein is Protein teflon of Drosophila persimilis (Fruit fly).